Here is a 257-residue protein sequence, read N- to C-terminus: Hydroxyethylthiazole kinase (257 aa).

Methionine 49 contributes to the substrate binding site. Positions 124 and 170 each coordinate ATP. Glycine 197 contacts substrate.

Belongs to the Thz kinase family. Mg(2+) serves as cofactor.

The catalysed reaction is 5-(2-hydroxyethyl)-4-methylthiazole + ATP = 4-methyl-5-(2-phosphooxyethyl)-thiazole + ADP + H(+). It participates in cofactor biosynthesis; thiamine diphosphate biosynthesis; 4-methyl-5-(2-phosphoethyl)-thiazole from 5-(2-hydroxyethyl)-4-methylthiazole: step 1/1. Catalyzes the phosphorylation of the hydroxyl group of 4-methyl-5-beta-hydroxyethylthiazole (THZ). This is Hydroxyethylthiazole kinase from Klebsiella pneumoniae (strain 342).